A 775-amino-acid polypeptide reads, in one-letter code: WD repeat-containing protein pop1 (775 aa).

The F-box domain occupies 298-345 (KNFLTGFPAEITNLVLTHLDAPSLCAVSQVSHHWYKLVSSNEELWKSL). 5 WD repeats span residues 444 to 472 (EHEGDVWTFEYVGDTLVTGSTDRTVRVWD), 484 to 538 (GHTS…RLWS), 575 to 603 (GHTDSVREVACLGDLIVSASYDGTLRVWK), 615 to 645 (GHVGRVYSVTINPSRQQCISAGTDAKIRIWN), and 657 to 687 (GHSNLVSQVTFNQNILVSASAPPDTSLRVWD).

Homodimer and heterodimer with pop2. Binds to cdc18, phosphorylated cig2, cul1, pip1 and skp1.

The protein resides in the nucleus. Involved in maintenance of ploidy through proteasome dependent degradation of CDK inhibitor rum1 and S-phase initiator cdc18. Functions as a recognition factor for rum1 and cdc18, which are subsequently ubiquitinated and targeted to the 26S proteasome for degradation. Together with pop2, required for cig2 instability during G2 and M phase and cig2 degradation in exponentially growing cells. Regulates cell-cycle progression under starvation through the rum1 protein. This chain is WD repeat-containing protein pop1 (pop1), found in Schizosaccharomyces pombe (strain 972 / ATCC 24843) (Fission yeast).